The primary structure comprises 192 residues: Probable GTP-binding protein EngB (192 aa).

The 171-residue stretch at 22–192 (SLPEIVFVGR…LLEQLENYTG (171 aa)) folds into the EngB-type G domain. Residues 30 to 37 (GRSNVGKS), 57 to 61 (GKTQL), 75 to 78 (DLPG), 142 to 145 (TKYD), and 172 to 174 (YSA) each bind GTP. Mg(2+) contacts are provided by Ser-37 and Thr-59.

This sequence belongs to the TRAFAC class TrmE-Era-EngA-EngB-Septin-like GTPase superfamily. EngB GTPase family. It depends on Mg(2+) as a cofactor.

In terms of biological role, necessary for normal cell division and for the maintenance of normal septation. This chain is Probable GTP-binding protein EngB, found in Prosthecochloris aestuarii (strain DSM 271 / SK 413).